We begin with the raw amino-acid sequence, 443 residues long: ATP-dependent protease ATPase subunit HslU (443 aa).

ATP contacts are provided by residues Ile-18, 60-65 (GVGKTE), Asp-256, Glu-321, and Arg-393.

It belongs to the ClpX chaperone family. HslU subfamily. A double ring-shaped homohexamer of HslV is capped on each side by a ring-shaped HslU homohexamer. The assembly of the HslU/HslV complex is dependent on binding of ATP.

Its subcellular location is the cytoplasm. In terms of biological role, ATPase subunit of a proteasome-like degradation complex; this subunit has chaperone activity. The binding of ATP and its subsequent hydrolysis by HslU are essential for unfolding of protein substrates subsequently hydrolyzed by HslV. HslU recognizes the N-terminal part of its protein substrates and unfolds these before they are guided to HslV for hydrolysis. This is ATP-dependent protease ATPase subunit HslU from Salmonella typhi.